The chain runs to 148 residues: Snaclec alboaggregin-D subunit beta (148 aa).

The signal sequence occupies residues M1–A23. A disulfide bridge connects residues C27 and C38. The C-type lectin domain maps to Y34–K145. N47 carries N-linked (GlcNAc...) asparagine glycosylation. Intrachain disulfides connect C55–C144 and C121–C136. An N-linked (GlcNAc...) asparagine glycan is attached at N137.

As to quaternary structure, tetramer of heterodimers of alpha and beta subunits (alphabeta)(4); disulfide-linked. Expressed by the venom gland.

Its subcellular location is the secreted. Functionally, snaclec that induces human platelet aggregation in the absence of any cofactor with the EC(50) of 0.25 nM and causes tyrosine phosphorylation in human platelets. Antibodies against either platelet GPIbalpha (GP1BA) or GPVI (GP6) inhibit alboaggregin D-induced platelet aggregation. Only the combination of these two antibodies completely inhibit aggregation, suggesting that it acts through both GPIbalpha (GP1BA) and GPVI (GP6). This is Snaclec alboaggregin-D subunit beta from Trimeresurus albolabris (White-lipped pit viper).